We begin with the raw amino-acid sequence, 56 residues long: Large ribosomal subunit protein bL32 (56 aa).

Residues 1–16 are compositionally biased toward basic residues; it reads MAVQKSKKSRSMRGMR. Positions 1–33 are disordered; that stretch reads MAVQKSKKSRSMRGMRRSHDALTTSAVSVDATS. Positions 21–33 are enriched in polar residues; that stretch reads ALTTSAVSVDATS.

The protein belongs to the bacterial ribosomal protein bL32 family.

This chain is Large ribosomal subunit protein bL32, found in Aliivibrio fischeri (strain ATCC 700601 / ES114) (Vibrio fischeri).